We begin with the raw amino-acid sequence, 415 residues long: Serine hydroxymethyltransferase (415 aa).

Residues L121 and 125–127 contribute to the (6S)-5,6,7,8-tetrahydrofolate site; that span reads GHL. An N6-(pyridoxal phosphate)lysine modification is found at K229. (6S)-5,6,7,8-tetrahydrofolate is bound at residue 352–354; that stretch reads SPF.

This sequence belongs to the SHMT family. Homodimer. It depends on pyridoxal 5'-phosphate as a cofactor.

It localises to the cytoplasm. The catalysed reaction is (6R)-5,10-methylene-5,6,7,8-tetrahydrofolate + glycine + H2O = (6S)-5,6,7,8-tetrahydrofolate + L-serine. The protein operates within one-carbon metabolism; tetrahydrofolate interconversion. It participates in amino-acid biosynthesis; glycine biosynthesis; glycine from L-serine: step 1/1. Catalyzes the reversible interconversion of serine and glycine with tetrahydrofolate (THF) serving as the one-carbon carrier. This reaction serves as the major source of one-carbon groups required for the biosynthesis of purines, thymidylate, methionine, and other important biomolecules. Also exhibits THF-independent aldolase activity toward beta-hydroxyamino acids, producing glycine and aldehydes, via a retro-aldol mechanism. The sequence is that of Serine hydroxymethyltransferase from Methylobacillus flagellatus (strain ATCC 51484 / DSM 6875 / VKM B-1610 / KT).